We begin with the raw amino-acid sequence, 535 residues long: Arylsulfatase G (535 aa).

An N-terminal signal peptide occupies residues 1-18 (MGWLFLKVLFLGVTFLGC). Positions 44, 45, and 84 each coordinate Ca(2+). Residue cysteine 84 is the Nucleophile of the active site. The residue at position 84 (cysteine 84) is a 3-oxoalanine (Cys). Residue asparagine 117 is glycosylated (N-linked (GlcNAc...) asparagine). Substrate is bound at residue lysine 137. Histidine 139 is an active-site residue. Position 162 (serine 162) interacts with substrate. Asparagine 215 carries an N-linked (GlcNAc...) asparagine glycan. Residue histidine 251 participates in substrate binding. Residues aspartate 302 and asparagine 303 each coordinate Ca(2+). 2 N-linked (GlcNAc...) asparagine glycosylation sites follow: asparagine 356 and asparagine 497.

Belongs to the sulfatase family. It depends on Ca(2+) as a cofactor. N-glycosylated with both high mannose and complex type sugars. In terms of processing, the conversion to 3-oxoalanine (also known as C-formylglycine, FGly), of a serine or cysteine residue in prokaryotes and of a cysteine residue in eukaryotes, is critical for catalytic activity. Post-translationally, the 63-kDa precursor undergoes proteolytic processing in two steps, yielding two fragments in the first step (apparent molecular masses of 44 and 18 kDa). In the second step, the 44-kDa fragment is processed further to the 34- and 10-kDa chains. The 10-kDa chain is a cleavage product of the 44-kDa fragment but linked to the 18-kDa chain through a disulfide bridge.

It is found in the lysosome. The catalysed reaction is an aryl sulfate + H2O = a phenol + sulfate + H(+). The enzyme catalyses Hydrolysis of the 3-sulfate groups of the N-sulfo-D-glucosamine 3-O-sulfate units of heparin.. Its function is as follows. Displays arylsulfatase activity with pseudosubstrates at acidic pH, such as p-nitrocatechol sulfate. Catalyzes the hydrolysis of the 3-sulfate groups of the N-sulfo-D-glucosamine 3-O-sulfate units of heparin. This is Arylsulfatase G (ARSG) from Canis lupus familiaris (Dog).